A 167-amino-acid chain; its full sequence is NAD(P)H-quinone oxidoreductase subunit I, chloroplastic (167 aa).

2 consecutive 4Fe-4S ferredoxin-type domains span residues 55 to 84 (GRIH…VDWK) and 95 to 124 (LNYS…MTEE). [4Fe-4S] cluster is bound by residues Cys-64, Cys-67, Cys-70, Cys-74, Cys-104, Cys-107, Cys-110, and Cys-114.

It belongs to the complex I 23 kDa subunit family. NDH is composed of at least 16 different subunits, 5 of which are encoded in the nucleus. [4Fe-4S] cluster serves as cofactor.

The protein localises to the plastid. The protein resides in the chloroplast thylakoid membrane. It carries out the reaction a plastoquinone + NADH + (n+1) H(+)(in) = a plastoquinol + NAD(+) + n H(+)(out). It catalyses the reaction a plastoquinone + NADPH + (n+1) H(+)(in) = a plastoquinol + NADP(+) + n H(+)(out). NDH shuttles electrons from NAD(P)H:plastoquinone, via FMN and iron-sulfur (Fe-S) centers, to quinones in the photosynthetic chain and possibly in a chloroplast respiratory chain. The immediate electron acceptor for the enzyme in this species is believed to be plastoquinone. Couples the redox reaction to proton translocation, and thus conserves the redox energy in a proton gradient. The polypeptide is NAD(P)H-quinone oxidoreductase subunit I, chloroplastic (Citrus sinensis (Sweet orange)).